We begin with the raw amino-acid sequence, 226 residues long: Orotate phosphoribosyltransferase (226 aa).

Lys-29 lines the 5-phospho-alpha-D-ribose 1-diphosphate pocket. Orotate is bound at residue 37 to 38 (FF). 5-phospho-alpha-D-ribose 1-diphosphate-binding positions include 75–76 (YK), Arg-101, Lys-102, Lys-105, His-107, and 126–134 (DDVISAGTS). Orotate is bound by residues Ser-130 and Arg-158.

It belongs to the purine/pyrimidine phosphoribosyltransferase family. PyrE subfamily. In terms of assembly, homodimer. The cofactor is Mg(2+).

The catalysed reaction is orotidine 5'-phosphate + diphosphate = orotate + 5-phospho-alpha-D-ribose 1-diphosphate. It participates in pyrimidine metabolism; UMP biosynthesis via de novo pathway; UMP from orotate: step 1/2. In terms of biological role, catalyzes the transfer of a ribosyl phosphate group from 5-phosphoribose 1-diphosphate to orotate, leading to the formation of orotidine monophosphate (OMP). The polypeptide is Orotate phosphoribosyltransferase (Ralstonia nicotianae (strain ATCC BAA-1114 / GMI1000) (Ralstonia solanacearum)).